Here is a 452-residue protein sequence, read N- to C-terminus: MITKAHKGEVGLGLPEKKKKKKKVVKEPKTQYSVLNSDNYFAEVCPRATPPLKGVIQEQAPRMPLVKKKKKKKGHSTICEEHLEPEITLRAGRTERSHSPRTQALGLSKSLSAEKRKSMSPGSRVKTSPDPRQDEEVTRVGKKLKKHKKEKKAKEATAFSGRDPWFCEAGNTVYTHSVGKDGVREQAALGQKQKQGSPREHSVKMKKKKKIHWEGDPPLGHPECSWSLESSPTKGSKKKPVRVEAPEYIPIGDGSRASVKKKVKSKKRVEQADTEEPALKRKKKKKKRQQSEVAEEPWEEEPDTDLEVVLEKKGNMDEAHIDQVRRKALQEEIDRESGKTEAYDTKKWTGTQFGQWDTAGFENEEQKLKFLKLMGGFKNLPPSFSRPSPTVARPSMALSKKAADTLQRNLQQDYDRALSWKYSRGAGLGFSTAPAKVFYIDRNASKSIKFED.

Disordered regions lie at residues 1–28 (MITKAHKGEVGLGLPEKKKKKKKVVKEP), 55–161 (VIQE…AFSG), and 184–305 (REQA…PDTD). Lys7 is covalently cross-linked (Glycyl lysine isopeptide (Lys-Gly) (interchain with G-Cter in SUMO2)). Basic residues predominate over residues 65 to 75 (LVKKKKKKKGH). The segment covering 78 to 98 (ICEEHLEPEITLRAGRTERSH) has biased composition (basic and acidic residues). At Ser112 the chain carries Phosphoserine. Lys126 is covalently cross-linked (Glycyl lysine isopeptide (Lys-Gly) (interchain with G-Cter in SUMO2)). The span at 127–139 (TSPDPRQDEEVTR) shows a compositional bias: basic and acidic residues. The residue at position 128 (Ser128) is a Phosphoserine. Composition is skewed to basic residues over residues 140-151 (VGKKLKKHKKEK) and 258-267 (SVKKKVKSKK). Position 258 is a phosphoserine (Ser258). Lys280 is covalently cross-linked (Glycyl lysine isopeptide (Lys-Gly) (interchain with G-Cter in SUMO2)). Residues 293 to 305 (VAEEPWEEEPDTD) show a composition bias toward acidic residues. Residues 300 to 452 (EEPDTDLEVV…NASKSIKFED (153 aa)) form an interaction with ZNF106 region. Thr304 bears the Phosphothreonine mark. Glycyl lysine isopeptide (Lys-Gly) (interchain with G-Cter in SUMO2) cross-links involve residues Lys313, Lys347, Lys367, Lys369, and Lys401. An Omega-N-methylarginine modification is found at Arg424. Lys436 participates in a covalent cross-link: Glycyl lysine isopeptide (Lys-Gly) (interchain with G-Cter in SUMO2).

In terms of assembly, interacts with ZNF106.

It localises to the nucleus. It is found in the nucleolus. The protein is Lysine-rich nucleolar protein 1 (KNOP1) of Bos taurus (Bovine).